We begin with the raw amino-acid sequence, 370 residues long: MWRGGRLGSRGVRLLETLGFGCPSAVAQPPRLTSRSAYSGTQLTRNLQIKPWELGEHGTMCFRSYRMALSCLSRVKTYRTPWKRLYSTSQTTVDSREVKNFQALAHTWWDEYGKFAPLHSMNDLRVPFIRDNLLKTSASHHPGKPLSGMKILDVGCGGGLLTEPLGRLGASVVGIDPVAENIKIAQHHKSFDPVLDKRIQYKVCSLEEAVDESAECFDAVVASEVVEHVSHLEMFIQCCYQVLKPGGSLFITTVNKTQLSYALGIVFAEQIAGIVPKGTHTWEKFVSPEKLESILEPNGLSVETVAGLVYNPFSGYWHWSENTSLNYAAHAVRSRAQEHQEPAESALKGETGALHANTSGSPSVREEQRT.

Residues 1 to 86 (MWRGGRLGSR…TYRTPWKRLY (86 aa)) constitute a mitochondrion transit peptide. Arg125 provides a ligand contact to S-adenosyl-L-methionine. Residues Lys144 and Lys150 each carry the N6-acetyllysine modification. 2 residues coordinate S-adenosyl-L-methionine: Gly155 and Asp176. Lys197 is modified (N6-acetyllysine). Ser223 lines the S-adenosyl-L-methionine pocket. Mg(2+)-binding residues include Glu224, Glu227, and His228. Positions 336–370 (AQEHQEPAESALKGETGALHANTSGSPSVREEQRT) are disordered.

Belongs to the class I-like SAM-binding methyltransferase superfamily. UbiG/COQ3 family. In terms of assembly, component of a multi-subunit COQ enzyme complex, composed of at least COQ3, COQ4, COQ5, COQ6, COQ7 and COQ9. Mg(2+) is required as a cofactor.

Its subcellular location is the mitochondrion inner membrane. It catalyses the reaction 3,4-dihydroxy-5-(all-trans-decaprenyl)benzoate + S-adenosyl-L-methionine = 4-hydroxy-3-methoxy-5-(all-trans-decaprenyl)benzoate + S-adenosyl-L-homocysteine + H(+). It carries out the reaction a 3-demethylubiquinone + S-adenosyl-L-methionine = a ubiquinone + S-adenosyl-L-homocysteine. The enzyme catalyses 3-demethylubiquinol-10 + S-adenosyl-L-methionine = ubiquinol-10 + S-adenosyl-L-homocysteine + H(+). The protein operates within cofactor biosynthesis; ubiquinone biosynthesis. O-methyltransferase required for two non-consecutive steps during ubiquinone biosynthesis. Catalyzes the 2 O-methylation of 3,4-dihydroxy-5-(all-trans-decaprenyl)benzoic acid into 4-hydroxy-3-methoxy-5-(all-trans-decaprenyl)benzoic acid. Also catalyzes the last step of ubiquinone biosynthesis by mediating methylation of 3-demethylubiquinone into ubiquinone. Also able to mediate the methylation of 3-demethylubiquinol-10 into ubiquinol-10. The chain is Ubiquinone biosynthesis O-methyltransferase, mitochondrial from Mus musculus (Mouse).